The chain runs to 108 residues: Class I hydrophobin 3 (108 aa).

Positions 1–17 (MFSRVFAVASLAALALA) are cleaved as a signal peptide. Intrachain disulfides connect Cys-26–Cys-87, Cys-33–Cys-81, Cys-34–Cys-67, and Cys-88–Cys-101.

The protein belongs to the fungal hydrophobin family. Self-assembles to form functional amyloid fibrils called rodlets. Self-assembly into fibrillar rodlets occurs spontaneously at hydrophobic:hydrophilic interfaces and the rodlets further associate laterally to form amphipathic monolayers.

The protein resides in the secreted. It is found in the cell wall. Its function is as follows. Aerial growth, conidiation, and dispersal of filamentous fungi in the environment rely upon a capability of their secreting small amphipathic proteins called hydrophobins (HPBs) with low sequence identity. Class I can self-assemble into an outermost layer of rodlet bundles on aerial cell surfaces, conferring cellular hydrophobicity that supports fungal growth, development and dispersal; whereas Class II form highly ordered films at water-air interfaces through intermolecular interactions but contribute nothing to the rodlet structure. The polypeptide is Class I hydrophobin 3 (Pisolithus tinctorius (Dead man's foot)).